Consider the following 216-residue polypeptide: Pyrophosphatase PpaX (216 aa).

D12 (nucleophile) is an active-site residue.

It belongs to the HAD-like hydrolase superfamily. PpaX family. The cofactor is Mg(2+).

It catalyses the reaction diphosphate + H2O = 2 phosphate + H(+). Functionally, hydrolyzes pyrophosphate formed during P-Ser-HPr dephosphorylation by HPrK/P. Might play a role in controlling the intracellular pyrophosphate pool. The protein is Pyrophosphatase PpaX of Bacillus velezensis (strain DSM 23117 / BGSC 10A6 / LMG 26770 / FZB42) (Bacillus amyloliquefaciens subsp. plantarum).